The chain runs to 47 residues: Large ribosomal subunit protein eL40 (47 aa).

This sequence belongs to the eukaryotic ribosomal protein eL40 family.

This chain is Large ribosomal subunit protein eL40, found in Methanocaldococcus jannaschii (strain ATCC 43067 / DSM 2661 / JAL-1 / JCM 10045 / NBRC 100440) (Methanococcus jannaschii).